Here is a 476-residue protein sequence, read N- to C-terminus: NADH-quinone oxidoreductase subunit N (476 aa).

14 helical membrane passes run 10-30, 42-62, 77-97, 108-128, 129-149, 162-182, 202-222, 234-254, 268-288, 296-316, 323-343, 368-388, 392-412, and 445-465; these read AVLP…IGAI, LAIA…AVTI, FMKV…VDWL, AVLV…GDLI, ALYL…AINR, FVLG…IYGF, LVFG…AVPF, PTPV…AVFV, WQQI…FAAI, LLAY…AAGT, VLLY…CVLA, ALAL…AGFV, YVFL…GVVA, and AVLA…TPLI.

This sequence belongs to the complex I subunit 2 family. In terms of assembly, NDH-1 is composed of 14 different subunits. Subunits NuoA, H, J, K, L, M, N constitute the membrane sector of the complex.

It localises to the cell inner membrane. The enzyme catalyses a quinone + NADH + 5 H(+)(in) = a quinol + NAD(+) + 4 H(+)(out). NDH-1 shuttles electrons from NADH, via FMN and iron-sulfur (Fe-S) centers, to quinones in the respiratory chain. The immediate electron acceptor for the enzyme in this species is believed to be ubiquinone. Couples the redox reaction to proton translocation (for every two electrons transferred, four hydrogen ions are translocated across the cytoplasmic membrane), and thus conserves the redox energy in a proton gradient. The sequence is that of NADH-quinone oxidoreductase subunit N from Azorhizobium caulinodans (strain ATCC 43989 / DSM 5975 / JCM 20966 / LMG 6465 / NBRC 14845 / NCIMB 13405 / ORS 571).